Consider the following 105-residue polypeptide: MSIYFPIHCPDYLRSAKMTEVMMNTQPMEEIGLSPRKDGLSYQIFPDPSDFDRCCKLKDRLPSIVVEPTEGEVESGELRWPPEEFLVQEDEQDNCEETAKENKEQ.

The LBH domain occupies methionine 18–glutamate 104. At serine 63 the chain carries Phosphoserine. Positions leucine 86–glutamate 96 are enriched in acidic residues. Residues leucine 86 to glutamine 105 are disordered.

Belongs to the LBH family. In terms of tissue distribution, highly expressed in heart, and expressed at low levels in placenta, lung, skeletal muscle, kidney and liver.

The protein resides in the nucleus. It is found in the cytoplasm. Functionally, transcriptional activator which may act in mitogen-activated protein kinase signaling pathway. This chain is Protein LBH, found in Homo sapiens (Human).